Here is a 187-residue protein sequence, read N- to C-terminus: Elongation factor P (187 aa).

This sequence belongs to the elongation factor P family.

The protein resides in the cytoplasm. It participates in protein biosynthesis; polypeptide chain elongation. Functionally, involved in peptide bond synthesis. Stimulates efficient translation and peptide-bond synthesis on native or reconstituted 70S ribosomes in vitro. Probably functions indirectly by altering the affinity of the ribosome for aminoacyl-tRNA, thus increasing their reactivity as acceptors for peptidyl transferase. This Clavibacter michiganensis subsp. michiganensis (strain NCPPB 382) protein is Elongation factor P.